Here is a 332-residue protein sequence, read N- to C-terminus: Cell division protein ZipA (332 aa).

Over 1-6 (MMQDLR) the chain is Periplasmic. The helical transmembrane segment at 7–27 (LILIVVGAIAIIALLLHGLWT) threads the bilayer. Residues 28-332 (SRKERSSLFR…RIRDVLKANA (305 aa)) lie on the Cytoplasmic side of the membrane. Residues 40–51 (PVKRAKKARDET) show a composition bias toward basic and acidic residues. The tract at residues 40-189 (PVKRAKKARD…VQPAPQQPAE (150 aa)) is disordered. A compositionally biased stretch (low complexity) spans 76 to 88 (SFDSASVDSSSFD). Positions 93–105 (AREDVRSEAKSPF) are enriched in basic and acidic residues.

This sequence belongs to the ZipA family. In terms of assembly, interacts with FtsZ via their C-terminal domains.

Its subcellular location is the cell inner membrane. Functionally, essential cell division protein that stabilizes the FtsZ protofilaments by cross-linking them and that serves as a cytoplasmic membrane anchor for the Z ring. Also required for the recruitment to the septal ring of downstream cell division proteins. In Pectobacterium atrosepticum (strain SCRI 1043 / ATCC BAA-672) (Erwinia carotovora subsp. atroseptica), this protein is Cell division protein ZipA.